We begin with the raw amino-acid sequence, 849 residues long: Ribosome biogenesis protein ERB1 (849 aa).

A disordered region spans residues 1–130 (MARNSIKKSP…PKDDDLSRIN (130 aa)). Acidic residues-rich tracts occupy residues 29-44 (EAEEDSNDEESEDELN) and 51-123 (ASDD…EPKD). The required for interaction with NOP7 stretch occupies residues 286-405 (RFVPSKHEAK…LRQVPGYQDS (120 aa)). The interval 405 to 441 (SVRERFERSLDLYLAPRVRHNKLNIDPDSLIPDLPSP) is required for interaction with YTM1. WD repeat units follow at residues 457–496 (GHTGKIRTISIDPQGLWLATGSDDGSVRIWEILTGRQVYK) and 505–545 (NNED…FDIE). Over residues 569–581 (KISSQKEEDNKES) the composition is skewed to basic and acidic residues. The segment at 569 to 619 (KISSQKEEDNKESDNEDEDEEEDNDDDDDDDEPETSSTVEPKKEVAKWYPP) is disordered. Acidic residues predominate over residues 582-602 (DNEDEDEEEDNDDDDDDDEPE). 5 WD repeats span residues 633–675 (QCRK…SQSP), 678–716 (KSKGIIMDAKFHPFKPQLFVASQRQIKIYDLAQQVLLKK), 719–758 (PGVRLLSTIDIHPRGDNLIAGSYDKRVLWHDLDLSATPYK), 762–802 (YHEK…DLMT), and 818–849 (INQIGILDLIWHPKEPWLFSAGADGTARLWTT).

The protein belongs to the WD repeat BOP1/ERB1 family. In terms of assembly, component of the NOP7 complex, composed of ERB1, NOP7 and YTM1. The complex is held together by ERB1, which interacts with NOP7 via its N-terminal domain and with YTM1 via a high-affinity interaction between the seven-bladed beta-propeller domains of the 2 proteins. The NOP7 complex associates with the 66S pre-ribosome.

The protein resides in the nucleus. It localises to the nucleolus. The protein localises to the nucleoplasm. Component of the NOP7 complex, which is required for maturation of the 25S and 5.8S ribosomal RNAs and formation of the 60S ribosome. This is Ribosome biogenesis protein ERB1 from Candida albicans (strain SC5314 / ATCC MYA-2876) (Yeast).